We begin with the raw amino-acid sequence, 315 residues long: Ribose-phosphate pyrophosphokinase (315 aa).

ATP-binding positions include 37-39 and 96-97; these read DGE and RQ. Mg(2+) is bound by residues His131 and Asp170. Residue Lys194 is part of the active site. D-ribose 5-phosphate is bound by residues Arg196, Asp220, and 224-228; that span reads DTGGT.

This sequence belongs to the ribose-phosphate pyrophosphokinase family. Class I subfamily. In terms of assembly, homohexamer. Mg(2+) is required as a cofactor.

The protein localises to the cytoplasm. The enzyme catalyses D-ribose 5-phosphate + ATP = 5-phospho-alpha-D-ribose 1-diphosphate + AMP + H(+). The protein operates within metabolic intermediate biosynthesis; 5-phospho-alpha-D-ribose 1-diphosphate biosynthesis; 5-phospho-alpha-D-ribose 1-diphosphate from D-ribose 5-phosphate (route I): step 1/1. Functionally, involved in the biosynthesis of the central metabolite phospho-alpha-D-ribosyl-1-pyrophosphate (PRPP) via the transfer of pyrophosphoryl group from ATP to 1-hydroxyl of ribose-5-phosphate (Rib-5-P). The chain is Ribose-phosphate pyrophosphokinase from Shewanella oneidensis (strain ATCC 700550 / JCM 31522 / CIP 106686 / LMG 19005 / NCIMB 14063 / MR-1).